Consider the following 406-residue polypeptide: RING finger protein PSH1 (406 aa).

The segment at 30–72 (CSICHDYMFVPMMTPCGHNYCYGCLNTWFASNTQKELACPQCR) adopts an RING-type zinc-finger fold. Residues Ser143 and Ser191 each carry the phosphoserine modification. The interval 209-406 (RFASTNPFAN…RVVLGDSDDE (198 aa)) is disordered. 3 stretches are compositionally biased toward acidic residues: residues 223 to 232 (SSEDDDSSEE), 256 to 274 (AVDD…EEMD), and 281 to 291 (IEDDEDDEDED). A Phosphothreonine modification is found at Thr310. At Ser403 the chain carries Phosphoserine.

In terms of assembly, interacts with POB3 and SPT16.

The protein localises to the nucleus. In Saccharomyces cerevisiae (strain ATCC 204508 / S288c) (Baker's yeast), this protein is RING finger protein PSH1 (PSH1).